Consider the following 500-residue polypeptide: Lysine--tRNA ligase (500 aa).

Mg(2+) contacts are provided by Glu410 and Glu417.

Belongs to the class-II aminoacyl-tRNA synthetase family. In terms of assembly, homodimer. The cofactor is Mg(2+).

It is found in the cytoplasm. It carries out the reaction tRNA(Lys) + L-lysine + ATP = L-lysyl-tRNA(Lys) + AMP + diphosphate. The chain is Lysine--tRNA ligase from Shewanella putrefaciens (strain CN-32 / ATCC BAA-453).